The sequence spans 542 residues: Chaperonin GroEL 2 (542 aa).

Residues 30-33 (TLGP), K51, 87-91 (DGTTT), G415, and D496 each bind ATP. The interval 523 to 542 (AEKPKKDGQPQMPPAPGMDF) is disordered. Over residues 533 to 542 (QMPPAPGMDF) the composition is skewed to pro residues.

Belongs to the chaperonin (HSP60) family. As to quaternary structure, forms a cylinder of 14 subunits composed of two heptameric rings stacked back-to-back. Interacts with the co-chaperonin GroES.

The protein resides in the cytoplasm. It carries out the reaction ATP + H2O + a folded polypeptide = ADP + phosphate + an unfolded polypeptide.. Functionally, together with its co-chaperonin GroES, plays an essential role in assisting protein folding. The GroEL-GroES system forms a nano-cage that allows encapsulation of the non-native substrate proteins and provides a physical environment optimized to promote and accelerate protein folding. This is Chaperonin GroEL 2 from Sinorhizobium medicae (strain WSM419) (Ensifer medicae).